A 417-amino-acid polypeptide reads, in one-letter code: Gamma-glutamyl phosphate reductase (417 aa).

This sequence belongs to the gamma-glutamyl phosphate reductase family.

It localises to the cytoplasm. The catalysed reaction is L-glutamate 5-semialdehyde + phosphate + NADP(+) = L-glutamyl 5-phosphate + NADPH + H(+). It functions in the pathway amino-acid biosynthesis; L-proline biosynthesis; L-glutamate 5-semialdehyde from L-glutamate: step 2/2. In terms of biological role, catalyzes the NADPH-dependent reduction of L-glutamate 5-phosphate into L-glutamate 5-semialdehyde and phosphate. The product spontaneously undergoes cyclization to form 1-pyrroline-5-carboxylate. This Idiomarina loihiensis (strain ATCC BAA-735 / DSM 15497 / L2-TR) protein is Gamma-glutamyl phosphate reductase.